Consider the following 198-residue polypeptide: ATP synthase subunit b (198 aa).

The helical transmembrane segment at 49–67 (IWKWANFLILAGGLGYLVG) threads the bilayer.

Belongs to the ATPase B chain family. In terms of assembly, F-type ATPases have 2 components, F(1) - the catalytic core - and F(0) - the membrane proton channel. F(1) has five subunits: alpha(3), beta(3), gamma(1), delta(1), epsilon(1). F(0) has three main subunits: a(1), b(2) and c(10-14). The alpha and beta chains form an alternating ring which encloses part of the gamma chain. F(1) is attached to F(0) by a central stalk formed by the gamma and epsilon chains, while a peripheral stalk is formed by the delta and b chains.

The protein localises to the cell inner membrane. Functionally, f(1)F(0) ATP synthase produces ATP from ADP in the presence of a proton or sodium gradient. F-type ATPases consist of two structural domains, F(1) containing the extramembraneous catalytic core and F(0) containing the membrane proton channel, linked together by a central stalk and a peripheral stalk. During catalysis, ATP synthesis in the catalytic domain of F(1) is coupled via a rotary mechanism of the central stalk subunits to proton translocation. Its function is as follows. Component of the F(0) channel, it forms part of the peripheral stalk, linking F(1) to F(0). The chain is ATP synthase subunit b from Solibacter usitatus (strain Ellin6076).